We begin with the raw amino-acid sequence, 399 residues long: Organelle RRM domain-containing protein 1, chloroplastic (399 aa).

A chloroplast-targeting transit peptide spans 1–52 (MDAARASLLLAGGLAVSTSTSAVATAAQTVSIPHLSPHTRRRRQRRFLRLAS). An RRM domain is found at 295–373 (KRLFVTGLSF…WMIVVDVAKH (79 aa)). A disordered region spans residues 377–399 (DRQPPYSASGRSNQVLRSRYHTG).

Its subcellular location is the plastid. The protein localises to the chloroplast. Involved in C-to-U editing of chloroplastic RNA. Functions as major chloroplastic editing factor. Controls a majority of the chloroplastic editing sites. This Oryza sativa subsp. japonica (Rice) protein is Organelle RRM domain-containing protein 1, chloroplastic.